Reading from the N-terminus, the 330-residue chain is 4-hydroxythreonine-4-phosphate dehydrogenase (330 aa).

The substrate site is built by His-135 and Thr-136. The a divalent metal cation site is built by His-165, His-210, and His-266. The substrate site is built by Lys-274, Asn-283, and Arg-292.

Belongs to the PdxA family. As to quaternary structure, homodimer. Requires Zn(2+) as cofactor. The cofactor is Mg(2+). Co(2+) is required as a cofactor.

The protein localises to the cytoplasm. The enzyme catalyses 4-(phosphooxy)-L-threonine + NAD(+) = 3-amino-2-oxopropyl phosphate + CO2 + NADH. It participates in cofactor biosynthesis; pyridoxine 5'-phosphate biosynthesis; pyridoxine 5'-phosphate from D-erythrose 4-phosphate: step 4/5. Its function is as follows. Catalyzes the NAD(P)-dependent oxidation of 4-(phosphooxy)-L-threonine (HTP) into 2-amino-3-oxo-4-(phosphooxy)butyric acid which spontaneously decarboxylates to form 3-amino-2-oxopropyl phosphate (AHAP). This is 4-hydroxythreonine-4-phosphate dehydrogenase from Vibrio cholerae serotype O1 (strain ATCC 39315 / El Tor Inaba N16961).